Reading from the N-terminus, the 64-residue chain is Large ribosomal subunit protein bL33 (64 aa).

This sequence belongs to the bacterial ribosomal protein bL33 family.

The sequence is that of Large ribosomal subunit protein bL33 from Synechococcus sp. (strain JA-3-3Ab) (Cyanobacteria bacterium Yellowstone A-Prime).